The primary structure comprises 330 residues: 4-hydroxythreonine-4-phosphate dehydrogenase (330 aa).

T133 contributes to the substrate binding site. The a divalent metal cation site is built by H161, H206, and H261. Substrate-binding residues include K269, N278, and R287.

This sequence belongs to the PdxA family. In terms of assembly, homodimer. Zn(2+) is required as a cofactor. It depends on Mg(2+) as a cofactor. Co(2+) serves as cofactor.

The protein resides in the cytoplasm. It catalyses the reaction 4-(phosphooxy)-L-threonine + NAD(+) = 3-amino-2-oxopropyl phosphate + CO2 + NADH. The protein operates within cofactor biosynthesis; pyridoxine 5'-phosphate biosynthesis; pyridoxine 5'-phosphate from D-erythrose 4-phosphate: step 4/5. Catalyzes the NAD(P)-dependent oxidation of 4-(phosphooxy)-L-threonine (HTP) into 2-amino-3-oxo-4-(phosphooxy)butyric acid which spontaneously decarboxylates to form 3-amino-2-oxopropyl phosphate (AHAP). This is 4-hydroxythreonine-4-phosphate dehydrogenase from Xylella fastidiosa (strain Temecula1 / ATCC 700964).